The primary structure comprises 314 residues: Putative S-adenosyl-L-methionine-dependent methyltransferase MUL_4402 (314 aa).

Residues Asp132 and 161-162 (DL) each bind S-adenosyl-L-methionine. Positions 291-314 (RPVPDDAEGPVPPTLFVSAHRPAA) are disordered.

This sequence belongs to the UPF0677 family.

Exhibits S-adenosyl-L-methionine-dependent methyltransferase activity. This is Putative S-adenosyl-L-methionine-dependent methyltransferase MUL_4402 from Mycobacterium ulcerans (strain Agy99).